Reading from the N-terminus, the 160-residue chain is MTRGLVFFVSTACGILADQLSKFIITANLATGTSIPESGFFQIVHVHNTGAAFSIFRGHIEWLIAASVLGVILAMTAFFIRKKLPFLDTRPGLIALGVILAGTVGNLIDRVRLGYVTDFIRVGDFPTFNIADSCLTVGVIGLLLLYIVSSHVSGDTSENV.

Transmembrane regions (helical) follow at residues 60–80 and 84–104; these read IEWL…AFFI and LPFL…AGTV. Catalysis depends on residues Asp-118 and Asp-132. A helical membrane pass occupies residues 128–148; the sequence is FNIADSCLTVGVIGLLLLYIV.

Belongs to the peptidase A8 family.

The protein localises to the cell membrane. It catalyses the reaction Release of signal peptides from bacterial membrane prolipoproteins. Hydrolyzes -Xaa-Yaa-Zaa-|-(S,diacylglyceryl)Cys-, in which Xaa is hydrophobic (preferably Leu), and Yaa (Ala or Ser) and Zaa (Gly or Ala) have small, neutral side chains.. The protein operates within protein modification; lipoprotein biosynthesis (signal peptide cleavage). This protein specifically catalyzes the removal of signal peptides from prolipoproteins. This chain is Lipoprotein signal peptidase, found in Dehalococcoides mccartyi (strain CBDB1).